A 197-amino-acid chain; its full sequence is Protein-S-isoprenylcysteine O-methyltransferase A (197 aa).

3 helical membrane-spanning segments follow: residues 16-36, 52-72, and 81-101; these read MLLS…TIHG, ALAM…FPGL, and FGLI…ITAG. Residues 116 to 119, Tyr-124, and 129 to 132 each bind S-adenosyl-L-methionine; these read HGLV and HPSY. A helical transmembrane segment spans residues 140–160; it reads VGTQVMLCNPVSAVAFAVVVW. Arg-166 is a binding site for substrate. Residue Glu-170 coordinates S-adenosyl-L-methionine.

The protein belongs to the class VI-like SAM-binding methyltransferase superfamily. Isoprenylcysteine carboxyl methyltransferase family. It depends on Zn(2+) as a cofactor. As to expression, expressed primarily in flowers, stems, leaves and roots. Almost not expressed in siliques. Detected in root tips and vascular tissues of roots, cotyledons, petiols, hypocotyls, filaments, pollen grains and the distal and proximal portions of the gynoecium.

Its subcellular location is the endoplasmic reticulum membrane. The catalysed reaction is [protein]-C-terminal S-[(2E,6E)-farnesyl]-L-cysteine + S-adenosyl-L-methionine = [protein]-C-terminal S-[(2E,6E)-farnesyl]-L-cysteine methyl ester + S-adenosyl-L-homocysteine. Its activity is regulated as follows. Inhibited by farnesylthioacetic acid (FTAA) and N-acetyl-S-trans, trans-farnesyl-l-cysteine (AFC). Functionally, catalyzes the post-translational methylation of isoprenylated C-terminal cysteine residues, resulting in the modulation of the function of prenylated proteins. Involved in negative regulation of abscisic acid signaling. Carboxyl methylation is a reversible and potentially regulated step in the post-translational modification of prenylated proteins. The chain is Protein-S-isoprenylcysteine O-methyltransferase A from Arabidopsis thaliana (Mouse-ear cress).